The primary structure comprises 166 residues: Bacterial non-heme ferritin (166 aa).

One can recognise a Ferritin-like diiron domain in the interval 2 to 145; it reads LSKELLAALN…THIDYLTRIG (144 aa). Fe cation is bound by residues E17, E50, H53, E94, and Q127.

It belongs to the ferritin family. Prokaryotic subfamily.

The protein localises to the cytoplasm. The catalysed reaction is 4 Fe(2+) + O2 + 6 H2O = 4 iron(III) oxide-hydroxide + 12 H(+). Iron-storage protein. The protein is Bacterial non-heme ferritin (ftnA) of Staphylococcus epidermidis (strain ATCC 12228 / FDA PCI 1200).